A 432-amino-acid chain; its full sequence is MYYCISFTHKNTDIALREKLSFSNEAKKSEFLKIISTHENIEECLVISTCNRVEIVAFVKMACAEFIVKSLALLCDVDKDILLEKADIFEDSGAIHHLFSVASSLDSLVVGETQIAGQLKDAFAFAVKNNFCGVHLSRAVHSAFKCAAKVRNETQISKNPISVASVAVAKAKELADLAQKKAVVIGAGEMGELAAKHLIAAGAKVIILNRDLQKAKDLCERLGVLSEYDSLENLKKYLNQYEFFFSATNAPNAIITNSLIEELPYKRYFFDIAVPRDIDINENENISVFAVDDLENVVQKNLALREQEARMAYGIIGRETSEFFRYLNDLALMPIIKAIRLQAKEYADKQLEIALKKGYLKKSDKEEARKLIHQVFKAFLHTPTVNLKHLQGKMQSDTVINAMRYVFDLQNNLEGLNQYKCEFDMENNDEIY.

Substrate is bound by residues 49-52, Ser-107, 112-114, and Gln-118; these read TCNR and ETQ. Residue Cys-50 is the Nucleophile of the active site. Residue 186–191 coordinates NADP(+); that stretch reads GAGEMG.

This sequence belongs to the glutamyl-tRNA reductase family. In terms of assembly, homodimer.

The enzyme catalyses (S)-4-amino-5-oxopentanoate + tRNA(Glu) + NADP(+) = L-glutamyl-tRNA(Glu) + NADPH + H(+). The protein operates within porphyrin-containing compound metabolism; protoporphyrin-IX biosynthesis; 5-aminolevulinate from L-glutamyl-tRNA(Glu): step 1/2. Functionally, catalyzes the NADPH-dependent reduction of glutamyl-tRNA(Glu) to glutamate 1-semialdehyde (GSA). The polypeptide is Glutamyl-tRNA reductase (Campylobacter jejuni subsp. jejuni serotype O:6 (strain 81116 / NCTC 11828)).